A 183-amino-acid polypeptide reads, in one-letter code: Large ribosomal subunit protein eL18 (183 aa).

The segment at 151–183 (HFGPAPGAPRSHTKPYVRSKGHEQAKPSRRSNV) is disordered.

This sequence belongs to the eukaryotic ribosomal protein eL18 family.

It localises to the cytoplasm. The sequence is that of Large ribosomal subunit protein eL18 (RpL18) from Plutella xylostella (Diamondback moth).